We begin with the raw amino-acid sequence, 151 residues long: NADH dehydrogenase [ubiquinone] 1 beta subcomplex subunit 11, mitochondrial (151 aa).

Residues Met1–Trp29 constitute a mitochondrion transit peptide. Residues Gly40–Glu62 form a disordered region. A helical membrane pass occupies residues Ala87–Val107.

The protein belongs to the complex I NDUFB11 subunit family. Complex I is composed of 45 different subunits. Interacts with BCAP31.

Its subcellular location is the mitochondrion inner membrane. Functionally, accessory subunit of the mitochondrial membrane respiratory chain NADH dehydrogenase (Complex I), that is believed not to be involved in catalysis. Complex I functions in the transfer of electrons from NADH to the respiratory chain. The immediate electron acceptor for the enzyme is believed to be ubiquinone. In Mus musculus (Mouse), this protein is NADH dehydrogenase [ubiquinone] 1 beta subcomplex subunit 11, mitochondrial (Ndufb11).